A 205-amino-acid polypeptide reads, in one-letter code: Holliday junction branch migration complex subunit RuvA (205 aa).

A domain I region spans residues methionine 1–lysine 62. Positions threonine 63–leucine 141 are domain II. A flexible linker region spans residues phenylalanine 142–lysine 152. Residues glycine 153–arginine 205 are domain III.

The protein belongs to the RuvA family. Homotetramer. Forms an RuvA(8)-RuvB(12)-Holliday junction (HJ) complex. HJ DNA is sandwiched between 2 RuvA tetramers; dsDNA enters through RuvA and exits via RuvB. An RuvB hexamer assembles on each DNA strand where it exits the tetramer. Each RuvB hexamer is contacted by two RuvA subunits (via domain III) on 2 adjacent RuvB subunits; this complex drives branch migration. In the full resolvosome a probable DNA-RuvA(4)-RuvB(12)-RuvC(2) complex forms which resolves the HJ.

The protein resides in the cytoplasm. Its function is as follows. The RuvA-RuvB-RuvC complex processes Holliday junction (HJ) DNA during genetic recombination and DNA repair, while the RuvA-RuvB complex plays an important role in the rescue of blocked DNA replication forks via replication fork reversal (RFR). RuvA specifically binds to HJ cruciform DNA, conferring on it an open structure. The RuvB hexamer acts as an ATP-dependent pump, pulling dsDNA into and through the RuvAB complex. HJ branch migration allows RuvC to scan DNA until it finds its consensus sequence, where it cleaves and resolves the cruciform DNA. This Bacillus cytotoxicus (strain DSM 22905 / CIP 110041 / 391-98 / NVH 391-98) protein is Holliday junction branch migration complex subunit RuvA.